We begin with the raw amino-acid sequence, 486 residues long: MANYKGRGNVMIRSMLLGLYGIINIVCVNGTFINYKDALTKSLIFLEAQRSGKLPPNNRVPWRGDSALDDGKLVNVDLSGGYYDAGDNVKYGLPMAFTITTLAWSTITYEKELRATGELENARAAIRWGTDYFLKCASRKNRLYVQVGDPNADHQCWARPENMKTPRTVLEISDKVPGTEIAAEAAAAFAASSIVFRHVDHKYARRLLNKAKLLFKLAKSHKGTYDGECPFYCSNSGYNDELIWAATWLYKATRNHLYLSYLKFEAISAYVAEFSWDLKYAGAQILITKLIFEGHKGLDLYKQQADSFVCSNLPGSPYHQVFTTPGGMIHLRDGANSQYVTATAFLFSAYADILQKHNQKISCGSHQFDSTHLMAFAKKQIDYILGHNPQGRSYMVGFGPNPPKQAHHRGASVPMHEANAPLSCPLSFVKWYNKNVPNANELTGAILGGPDRQDKFQDLRWTSVYTEPCTYINSIAVGVLAKLAAA.

The first 30 residues, 1-30 (MANYKGRGNVMIRSMLLGLYGIINIVCVNG), serve as a signal peptide directing secretion. An N-linked (GlcNAc...) asparagine glycan is attached at Asn-29. Catalysis depends on Asp-87, which acts as the Nucleophile. Active-site residues include His-407, Asp-458, and Glu-467.

The protein belongs to the glycosyl hydrolase 9 (cellulase E) family.

It is found in the secreted. The catalysed reaction is Endohydrolysis of (1-&gt;4)-beta-D-glucosidic linkages in cellulose, lichenin and cereal beta-D-glucans.. In Arabidopsis thaliana (Mouse-ear cress), this protein is Endoglucanase 16.